The sequence spans 73 residues: UPF0270 protein SG2298 (73 aa).

The protein belongs to the UPF0270 family.

The protein is UPF0270 protein SG2298 of Sodalis glossinidius (strain morsitans).